The chain runs to 296 residues: uncharacterized protein (296 aa).

Residues 1–95 enclose the FAD-binding FR-type domain; that stretch reads MYKIVSKKEL…VGPLGVPSEF (95 aa).

This is an uncharacterized protein from Clostridium beijerinckii (Clostridium MP).